The following is a 100-amino-acid chain: Aspartyl/glutamyl-tRNA(Asn/Gln) amidotransferase subunit C (100 aa).

Belongs to the GatC family. In terms of assembly, heterotrimer of A, B and C subunits.

The catalysed reaction is L-glutamyl-tRNA(Gln) + L-glutamine + ATP + H2O = L-glutaminyl-tRNA(Gln) + L-glutamate + ADP + phosphate + H(+). The enzyme catalyses L-aspartyl-tRNA(Asn) + L-glutamine + ATP + H2O = L-asparaginyl-tRNA(Asn) + L-glutamate + ADP + phosphate + 2 H(+). In terms of biological role, allows the formation of correctly charged Asn-tRNA(Asn) or Gln-tRNA(Gln) through the transamidation of misacylated Asp-tRNA(Asn) or Glu-tRNA(Gln) in organisms which lack either or both of asparaginyl-tRNA or glutaminyl-tRNA synthetases. The reaction takes place in the presence of glutamine and ATP through an activated phospho-Asp-tRNA(Asn) or phospho-Glu-tRNA(Gln). The sequence is that of Aspartyl/glutamyl-tRNA(Asn/Gln) amidotransferase subunit C from Rickettsia typhi (strain ATCC VR-144 / Wilmington).